Consider the following 256-residue polypeptide: Indole-3-glycerol phosphate synthase (256 aa).

Belongs to the TrpC family.

The enzyme catalyses 1-(2-carboxyphenylamino)-1-deoxy-D-ribulose 5-phosphate + H(+) = (1S,2R)-1-C-(indol-3-yl)glycerol 3-phosphate + CO2 + H2O. Its pathway is amino-acid biosynthesis; L-tryptophan biosynthesis; L-tryptophan from chorismate: step 4/5. The polypeptide is Indole-3-glycerol phosphate synthase (Caldanaerobacter subterraneus subsp. tengcongensis (strain DSM 15242 / JCM 11007 / NBRC 100824 / MB4) (Thermoanaerobacter tengcongensis)).